Reading from the N-terminus, the 323-residue chain is MKKNKDVLLKNKILKKLNIINIKNLDNIKEKLKKPDWIKIKIPVNTSRIYQIKNALRKNNLYSVCEEAHCPNLSECFNNGTATFMILGSICTRNCPFCAVFHGRPNPVNVEEPQKLSDTIFDMGINYVVITSVVRDDLYDGGAEHFVNCIKAIKNKNQVKIEILVPDFRGRIELILNIFNKALPDIFNHNIENVPRLFKKIRPGANYQRSLLLLESFKKKYCSVLTKSGLMLGLGEKDVEIIQVMKDLYSSGVTLLTVGQYLQPSIHHLPVKRYIPLSEFENIKKEALSIGFTNAFCGPFIRSSYHASFQSHLPIKNNDINNI.

Residues C65, C70, C76, C91, C95, C98, and S304 each coordinate [4Fe-4S] cluster. A Radical SAM core domain is found at F77–T293.

Belongs to the radical SAM superfamily. Lipoyl synthase family. [4Fe-4S] cluster serves as cofactor.

The protein localises to the cytoplasm. It carries out the reaction [[Fe-S] cluster scaffold protein carrying a second [4Fe-4S](2+) cluster] + N(6)-octanoyl-L-lysyl-[protein] + 2 oxidized [2Fe-2S]-[ferredoxin] + 2 S-adenosyl-L-methionine + 4 H(+) = [[Fe-S] cluster scaffold protein] + N(6)-[(R)-dihydrolipoyl]-L-lysyl-[protein] + 4 Fe(3+) + 2 hydrogen sulfide + 2 5'-deoxyadenosine + 2 L-methionine + 2 reduced [2Fe-2S]-[ferredoxin]. It participates in protein modification; protein lipoylation via endogenous pathway; protein N(6)-(lipoyl)lysine from octanoyl-[acyl-carrier-protein]: step 2/2. Functionally, catalyzes the radical-mediated insertion of two sulfur atoms into the C-6 and C-8 positions of the octanoyl moiety bound to the lipoyl domains of lipoate-dependent enzymes, thereby converting the octanoylated domains into lipoylated derivatives. In Buchnera aphidicola subsp. Acyrthosiphon pisum (strain APS) (Acyrthosiphon pisum symbiotic bacterium), this protein is Lipoyl synthase.